The sequence spans 85 residues: MKVLVFAIVCSVLLQVVLSADEEARECIPTKHDCTNDRKNCCPGHECKCYNTQIGGSKKEQCGCKKSLLAKAKNFGGKVITIFKA.

The N-terminal stretch at 1–19 is a signal peptide; that stretch reads MKVLVFAIVCSVLLQVVLS. Positions 20–25 are cleaved as a propeptide — removed in mature form; that stretch reads ADEEAR. The short motif at 22–25 is the Processing quadruplet motif element; the sequence is EEAR. 4 disulfides stabilise this stretch: C27–C42, C34–C47, C41–C64, and C49–C62.

It belongs to the neurotoxin 19 (CSTX) family. Post-translationally, contains 4 disulfide bonds. In terms of processing, cleavage of the propeptide depends on the processing quadruplet motif (XXXR, with at least one of X being E). Expressed by the venom gland.

It is found in the secreted. Insect toxin. Causes paralysis in larvae of C.vicina by depolarizing membranes at the neuromuscular junction. This chain is Latartoxin-1a, found in Lachesana tarabaevi (Spider).